The following is a 214-amino-acid chain: Ribonuclease HII (214 aa).

Residues 26-214 enclose the RNase H type-2 domain; the sequence is EIVCGVDEAG…PVRAALDLIR (189 aa). Aspartate 32, glutamate 33, and aspartate 124 together coordinate a divalent metal cation.

This sequence belongs to the RNase HII family. Mn(2+) is required as a cofactor. Requires Mg(2+) as cofactor.

The protein localises to the cytoplasm. It catalyses the reaction Endonucleolytic cleavage to 5'-phosphomonoester.. Functionally, endonuclease that specifically degrades the RNA of RNA-DNA hybrids. The protein is Ribonuclease HII of Burkholderia cenocepacia (strain HI2424).